Reading from the N-terminus, the 393-residue chain is Fractalkine (393 aa).

The signal sequence occupies residues 1-24 (MAPSQLAWLLRLAAFFHLCTLLAG). The tract at residues 25–100 (QHLGMTKCNI…HQTAALTRNG (76 aa)) is chemokine and involved in interaction with ITGAV:ITGB3 and ITGA4:ITGB1. At 25-337 (QHLGMTKCNI…PDSQAATRRQ (313 aa)) the chain is on the extracellular side. Disulfide bonds link Cys32–Cys58 and Cys36–Cys74. Asn33 is a glycosylation site (N-linked (GlcNAc...) asparagine). Residues 101–337 (GKFEKRVDNV…PDSQAATRRQ (237 aa)) form a mucin-like stalk region. 2 disordered regions span residues 114–184 (ITSA…PQST) and 213–303 (EKAT…SGSQ). Polar residues-rich tracts occupy residues 153–172 (GTSQ…TSKA) and 223–240 (ALST…NVGS). The helical transmembrane segment at 338 to 358 (AVGLLAFLGLLFCLGVAMFAY) threads the bilayer. At 359-393 (QSLQGCPRKMAGEMVEGLRYVPRSCGSNSYVLVPV) the chain is on the cytoplasmic side.

The protein belongs to the intercrine delta family. As to quaternary structure, monomer. Forms a ternary complex with CX3CR1 and ITGAV:ITGB3 or ITGA4:ITGB1. Post-translationally, a soluble short form may be released by proteolytic cleavage from the long membrane-anchored form. As to expression, highest levels in brain (neurons). Significant levels in kidney, heart, lung and adrenal gland.

The protein localises to the cell membrane. Its subcellular location is the secreted. In terms of biological role, chemokine that acts as a ligand for both CX3CR1 and integrins ITGAV:ITGB3 and ITGA4:ITGB1. The CX3CR1-CX3CL1 signaling exerts distinct functions in different tissue compartments, such as immune response, inflammation, cell adhesion and chemotaxis. Regulates leukocyte adhesion and migration processes at the endothelium. Can activate integrins in both a CX3CR1-dependent and CX3CR1-independent manner. In the presence of CX3CR1, activates integrins by binding to the classical ligand-binding site (site 1) in integrins. In the absence of CX3CR1, binds to a second site (site 2) in integrins which is distinct from site 1 and enhances the binding of other integrin ligands to site 1. The soluble form is chemotactic for T-cells and monocytes, but not for neutrophils. Its function is as follows. The membrane-bound form promotes adhesion of those leukocytes to endothelial cells. This is Fractalkine (Cx3cl1) from Rattus norvegicus (Rat).